A 445-amino-acid polypeptide reads, in one-letter code: Phosphoglucosamine mutase (445 aa).

The active-site Phosphoserine intermediate is the S102. The Mg(2+) site is built by S102, D241, D243, and D245. A Phosphoserine modification is found at S102.

This sequence belongs to the phosphohexose mutase family. Mg(2+) is required as a cofactor. Post-translationally, activated by phosphorylation.

The catalysed reaction is alpha-D-glucosamine 1-phosphate = D-glucosamine 6-phosphate. Functionally, catalyzes the conversion of glucosamine-6-phosphate to glucosamine-1-phosphate. In Sodalis glossinidius (strain morsitans), this protein is Phosphoglucosamine mutase.